A 118-amino-acid chain; its full sequence is MKNRYIQQFEDAQLKDKTMPIFKAGDTLKLGITIKEGEKTRTQYFEGVCIAIRGNGVDKTFCVRKIGANNIGVEKIFPFYSESLASVEVLRVGRVRRAKLYYLRDRRGKAARIKEVRH.

This sequence belongs to the bacterial ribosomal protein bL19 family.

Its function is as follows. This protein is located at the 30S-50S ribosomal subunit interface and may play a role in the structure and function of the aminoacyl-tRNA binding site. The polypeptide is Large ribosomal subunit protein bL19 (Helicobacter pylori (strain P12)).